The sequence spans 603 residues: UvrABC system protein C (603 aa).

Residues 17–94 (TTSGCYKMLN…IKTHKPDYNV (78 aa)) enclose the GIY-YIG domain.

Belongs to the UvrC family. As to quaternary structure, interacts with UvrB in an incision complex.

The protein resides in the cytoplasm. Functionally, the UvrABC repair system catalyzes the recognition and processing of DNA lesions. UvrC both incises the 5' and 3' sides of the lesion. The N-terminal half is responsible for the 3' incision and the C-terminal half is responsible for the 5' incision. This Borreliella burgdorferi (strain ATCC 35210 / DSM 4680 / CIP 102532 / B31) (Borrelia burgdorferi) protein is UvrABC system protein C.